A 353-amino-acid chain; its full sequence is Holliday junction branch migration complex subunit RuvB (353 aa).

Positions 4 to 185 are large ATPase domain (RuvB-L); it reads ADRLITATGG…FGIVQRLEFY (182 aa). ATP is bound by residues I24, R25, G66, K69, T70, T71, 132–134, R175, Y185, and R222; that span reads EDF. T70 serves as a coordination point for Mg(2+). The tract at residues 186–256 is small ATPAse domain (RuvB-S); it reads NIADLSTIVS…TADKALNLLD (71 aa). The head domain (RuvB-H) stretch occupies residues 259-353; that stretch reads EHGFDHQDRR…DDFGDEPVDL (95 aa). Positions 295, 314, and 319 each coordinate DNA.

It belongs to the RuvB family. Homohexamer. Forms an RuvA(8)-RuvB(12)-Holliday junction (HJ) complex. HJ DNA is sandwiched between 2 RuvA tetramers; dsDNA enters through RuvA and exits via RuvB. An RuvB hexamer assembles on each DNA strand where it exits the tetramer. Each RuvB hexamer is contacted by two RuvA subunits (via domain III) on 2 adjacent RuvB subunits; this complex drives branch migration. In the full resolvosome a probable DNA-RuvA(4)-RuvB(12)-RuvC(2) complex forms which resolves the HJ.

It is found in the cytoplasm. It catalyses the reaction ATP + H2O = ADP + phosphate + H(+). Functionally, the RuvA-RuvB-RuvC complex processes Holliday junction (HJ) DNA during genetic recombination and DNA repair, while the RuvA-RuvB complex plays an important role in the rescue of blocked DNA replication forks via replication fork reversal (RFR). RuvA specifically binds to HJ cruciform DNA, conferring on it an open structure. The RuvB hexamer acts as an ATP-dependent pump, pulling dsDNA into and through the RuvAB complex. RuvB forms 2 homohexamers on either side of HJ DNA bound by 1 or 2 RuvA tetramers; 4 subunits per hexamer contact DNA at a time. Coordinated motions by a converter formed by DNA-disengaged RuvB subunits stimulates ATP hydrolysis and nucleotide exchange. Immobilization of the converter enables RuvB to convert the ATP-contained energy into a lever motion, pulling 2 nucleotides of DNA out of the RuvA tetramer per ATP hydrolyzed, thus driving DNA branch migration. The RuvB motors rotate together with the DNA substrate, which together with the progressing nucleotide cycle form the mechanistic basis for DNA recombination by continuous HJ branch migration. Branch migration allows RuvC to scan DNA until it finds its consensus sequence, where it cleaves and resolves cruciform DNA. This Pseudomonas syringae pv. syringae (strain B728a) protein is Holliday junction branch migration complex subunit RuvB.